Reading from the N-terminus, the 126-residue chain is Large ribosomal subunit protein bL12 (126 aa).

This sequence belongs to the bacterial ribosomal protein bL12 family. Homodimer. Part of the ribosomal stalk of the 50S ribosomal subunit. Forms a multimeric L10(L12)X complex, where L10 forms an elongated spine to which 2 to 4 L12 dimers bind in a sequential fashion. Binds GTP-bound translation factors.

In terms of biological role, forms part of the ribosomal stalk which helps the ribosome interact with GTP-bound translation factors. Is thus essential for accurate translation. The polypeptide is Large ribosomal subunit protein bL12 (Chlorobaculum parvum (strain DSM 263 / NCIMB 8327) (Chlorobium vibrioforme subsp. thiosulfatophilum)).